Reading from the N-terminus, the 300-residue chain is 2-dehydropantoate 2-reductase (300 aa).

NADP(+) is bound by residues 7–12, Lys74, Asn99, and Ala123; that span reads GAGAIG. Lys179 functions as the Proton donor in the catalytic mechanism. Residues Lys179, Asn183, Asn187, Asn197, and 246 to 249 each bind substrate; that span reads NYNS. Glu261 is an NADP(+) binding site.

It belongs to the ketopantoate reductase family.

Its subcellular location is the cytoplasm. It carries out the reaction (R)-pantoate + NAD(+) = 2-dehydropantoate + NADH + H(+). The catalysed reaction is (R)-pantoate + NADP(+) = 2-dehydropantoate + NADPH + H(+). The protein operates within cofactor biosynthesis; coenzyme A biosynthesis. Catalyzes the NAD(P)H-dependent reduction of ketopantoate into pantoic acid. The chain is 2-dehydropantoate 2-reductase (apbA) from Pyrococcus abyssi (strain GE5 / Orsay).